The following is a 33-amino-acid chain: Photosystem II reaction center protein Psb30 (33 aa).

A helical transmembrane segment spans residues 5–25; that stretch reads VVVQLGSLSLIVLAGPIIVLL.

It belongs to the Psb30/Ycf12 family. PSII is composed of 1 copy each of membrane proteins PsbA, PsbB, PsbC, PsbD, PsbE, PsbF, PsbH, PsbI, PsbJ, PsbK, PsbL, PsbM, PsbT, PsbX, PsbY, PsbZ, Psb30/Ycf12, peripheral proteins of the oxygen-evolving complex and a large number of cofactors. It forms dimeric complexes.

It localises to the plastid. The protein resides in the chloroplast thylakoid membrane. In terms of biological role, a core subunit of photosystem II (PSII), probably helps stabilize the reaction center. In Mesostigma viride (Green alga), this protein is Photosystem II reaction center protein Psb30.